A 254-amino-acid polypeptide reads, in one-letter code: Probable WRKY transcription factor 67 (254 aa).

Residues 102 to 170 (SRTMCPNDGF…YLGKHVCKAF (69 aa)) constitute a DNA-binding region (WRKY).

This sequence belongs to the WRKY group III family.

It localises to the nucleus. Transcription factor. Interacts specifically with the W box (5'-(T)TGAC[CT]-3'), a frequently occurring elicitor-responsive cis-acting element. This chain is Probable WRKY transcription factor 67 (WRKY67), found in Arabidopsis thaliana (Mouse-ear cress).